A 180-amino-acid chain; its full sequence is Large ribosomal subunit protein uL5 (180 aa).

Belongs to the universal ribosomal protein uL5 family. Part of the 50S ribosomal subunit; part of the 5S rRNA/L5/L18/L25 subcomplex. Contacts the 5S rRNA and the P site tRNA. Forms a bridge to the 30S subunit in the 70S ribosome.

Its function is as follows. This is one of the proteins that bind and probably mediate the attachment of the 5S RNA into the large ribosomal subunit, where it forms part of the central protuberance. In the 70S ribosome it contacts protein S13 of the 30S subunit (bridge B1b), connecting the 2 subunits; this bridge is implicated in subunit movement. Contacts the P site tRNA; the 5S rRNA and some of its associated proteins might help stabilize positioning of ribosome-bound tRNAs. The sequence is that of Large ribosomal subunit protein uL5 from Streptococcus pyogenes serotype M1.